The chain runs to 189 residues: Elongation factor P (189 aa).

Residue K34 is modified to N6-(3,6-diaminohexanoyl)-5-hydroxylysine.

It belongs to the elongation factor P family. Post-translationally, may be beta-lysylated on the epsilon-amino group of Lys-34 by the combined action of EpmA and EpmB, and then hydroxylated on the C5 position of the same residue by EpmC (if this protein is present). Lysylation is critical for the stimulatory effect of EF-P on peptide-bond formation. The lysylation moiety may extend toward the peptidyltransferase center and stabilize the terminal 3-CCA end of the tRNA. Hydroxylation of the C5 position on Lys-34 may allow additional potential stabilizing hydrogen-bond interactions with the P-tRNA.

The protein resides in the cytoplasm. The protein operates within protein biosynthesis; polypeptide chain elongation. Involved in peptide bond synthesis. Alleviates ribosome stalling that occurs when 3 or more consecutive Pro residues or the sequence PPG is present in a protein, possibly by augmenting the peptidyl transferase activity of the ribosome. Modification of Lys-34 is required for alleviation. This Idiomarina loihiensis (strain ATCC BAA-735 / DSM 15497 / L2-TR) protein is Elongation factor P.